The following is a 538-amino-acid chain: Putative cysteine ligase BshC (538 aa).

Residues 248-268 (ISKYKEVQEGLRNQQEVIKEL) are a coiled coil.

This sequence belongs to the BshC family.

Involved in bacillithiol (BSH) biosynthesis. May catalyze the last step of the pathway, the addition of cysteine to glucosamine malate (GlcN-Mal) to generate BSH. The chain is Putative cysteine ligase BshC from Bacillus cereus (strain B4264).